A 188-amino-acid chain; its full sequence is dCTP deaminase (188 aa).

109-114 lines the dCTP pocket; sequence KSTYAR. Glu-135 serves as the catalytic Proton donor/acceptor. DCTP-binding residues include Gln-154, Tyr-168, and Gln-178.

Belongs to the dCTP deaminase family. As to quaternary structure, homotrimer.

It carries out the reaction dCTP + H2O + H(+) = dUTP + NH4(+). The protein operates within pyrimidine metabolism; dUMP biosynthesis; dUMP from dCTP (dUTP route): step 1/2. Its function is as follows. Catalyzes the deamination of dCTP to dUTP. This is dCTP deaminase from Helicobacter pylori (strain J99 / ATCC 700824) (Campylobacter pylori J99).